Consider the following 464-residue polypeptide: MSMSSSNITSGFIDIATFDEIEKYMYGGPTATAYFVREIRKSTWFTQVPVPLSRNTGNAAFGQEWSVSISRAGDYLLQTWLRVNIPPVTLSGLLGNTYSLRWTKNLMHNLIREATITFNDLVAARFDNYHLDFWSAFTVPASKRNGYDNMIGNVSSLINPVAPGGTLGSVGGINLNLPLPFFFSRDTGVALPTAALPYNEMQINFNFRDWHELLILTNSALVPPASPYVPIVVGTHISAAPVLGPVQVWANYAIVSNEERRRMGCAIRDILIEQVQTAPRQNYVPLTNASPTFDIRFSHAIKALFFAVRNKTSAAEWSNYATSSPVVTGATVNYEPTGSFDPIANTTLIYENTNRLGAMGSDYFSLINPFYHAPTIPSFIGYHLYSYSLHFYDLDPMGSTNYGKLTNVSVVPQASPAAIAAAGGTGGQAGSDYPQNYEFVILAVNNNIVRISGGETPQNYIAVC.

This sequence belongs to the NCLDV major capsid protein family. As to quaternary structure, homotrimer. Post-translationally, the N-terminus is blocked.

The protein localises to the virion. Functionally, major capsid protein that self assembles to form an icosahedral capsid. Represents around 50% of the total virion protein mass. In Tipula (TIV), this protein is Major capsid protein (MCP).